Here is a 189-residue protein sequence, read N- to C-terminus: Ion-translocating oxidoreductase complex subunit B (189 aa).

A hydrophobic region spans residues 1 to 26; that stretch reads MSQVIIAIILLGLLALAFGALLGYAA. Residues 32–90 form the 4Fe-4S domain; it reads EGDPIIDQAEALLPQTQCGQCGYPGCRPYAEAIANGEKINKCPPGGTATMEKLAELMGV. [4Fe-4S] cluster contacts are provided by Cys49, Cys52, Cys57, Cys73, Cys114, Cys117, Cys120, Cys124, Cys144, Cys147, Cys150, and Cys154. 4Fe-4S ferredoxin-type domains follow at residues 105 to 134 and 135 to 164; these read KVAFIREAECIGCTKCIQACPVDAILGTGK and QMHTVITDYCTGCDLCVEPCPVDCIDMIPV.

It belongs to the 4Fe4S bacterial-type ferredoxin family. RnfB subfamily. In terms of assembly, the complex is composed of six subunits: RnfA, RnfB, RnfC, RnfD, RnfE and RnfG. It depends on [4Fe-4S] cluster as a cofactor.

It localises to the cell inner membrane. Its function is as follows. Part of a membrane-bound complex that couples electron transfer with translocation of ions across the membrane. The chain is Ion-translocating oxidoreductase complex subunit B from Shewanella loihica (strain ATCC BAA-1088 / PV-4).